Consider the following 214-residue polypeptide: Epoxide hydrolase EphH (214 aa).

Ser-28 acts as the Nucleophile in catalysis. Catalysis depends on charge relay system residues Asp-156 and His-186.

The protein belongs to the AB hydrolase superfamily.

It catalyses the reaction an epoxide + H2O = an ethanediol. Inhibited by AUDA, a known epoxide hydrolase inhibitor. Catalyzes the hydrolysis of epoxide-containing substrates. In vitro, catalyzes the hydrolysis of the synthetic compounds PHOME and styrene oxide. Plays an essential role in subverting phagosomal acidification. Plays a major role in the survival of M.tuberculosis (Mtb) during in vitro acidic stress and protects Mtb in response to phagosomal acidification inside macrophages. Also supports Mtb growth under the nutrient-deprived condition at pH 7.0. The chain is Epoxide hydrolase EphH from Mycobacterium tuberculosis (strain ATCC 25618 / H37Rv).